The sequence spans 251 residues: MRRKIVAGNWKLHGSRAFATELVAKLAAHMPLEGIDVVILPPLPYLGDLIEDFEAHHLSFGAQDVSSNEKGAYTGEVSASMLVDVGAGYGLVGHSERRQYHQESSELVARKFAAAIHAGLTPVLCVGESLEQREAGQTEAILRAQLEPVLALVGSAGFAGAVLAYEPIWAIGTGCTATPEQAQAVHAFLRGEVAKADARIADSLPILYGGSVKPDNAGELFAQPDVDGGLVGGASLVAEDFLAIARAAAAC.

9-11 contributes to the substrate binding site; the sequence is NWK. The Electrophile role is filled by His-94. The active-site Proton acceptor is Glu-166. Substrate contacts are provided by residues Gly-172, Ser-211, and 232–233; that span reads GG.

It belongs to the triosephosphate isomerase family. In terms of assembly, homodimer.

It is found in the cytoplasm. It catalyses the reaction D-glyceraldehyde 3-phosphate = dihydroxyacetone phosphate. It functions in the pathway carbohydrate biosynthesis; gluconeogenesis. The protein operates within carbohydrate degradation; glycolysis; D-glyceraldehyde 3-phosphate from glycerone phosphate: step 1/1. Involved in the gluconeogenesis. Catalyzes stereospecifically the conversion of dihydroxyacetone phosphate (DHAP) to D-glyceraldehyde-3-phosphate (G3P). The chain is Triosephosphate isomerase from Xanthomonas oryzae pv. oryzae (strain MAFF 311018).